Consider the following 1342-residue polypeptide: DNA-directed RNA polymerase subunit beta (1342 aa).

The protein belongs to the RNA polymerase beta chain family. The RNAP catalytic core consists of 2 alpha, 1 beta, 1 beta' and 1 omega subunit. When a sigma factor is associated with the core the holoenzyme is formed, which can initiate transcription.

The catalysed reaction is RNA(n) + a ribonucleoside 5'-triphosphate = RNA(n+1) + diphosphate. Functionally, DNA-dependent RNA polymerase catalyzes the transcription of DNA into RNA using the four ribonucleoside triphosphates as substrates. This is DNA-directed RNA polymerase subunit beta from Aliivibrio fischeri (strain MJ11) (Vibrio fischeri).